Reading from the N-terminus, the 721-residue chain is Protein mu-NS (721 aa).

The segment at 1-13 is interaction with sigma-NS; it reads MASFKGFSANTVP. The tract at residues 1 to 38 is RNA-binding; sequence MASFKGFSANTVPVSKAKRDISSLAATPGLRSQSFTPS. An interaction with mu-2 region spans residues 14-40; sequence VSKAKRDISSLAATPGLRSQSFTPSVD. The involved in the formation of factory-like inclusions stretch occupies residues 471-721; that stretch reads SNDVTDGIKL…IDFSVPTDEL (251 aa). Coiled coils occupy residues 522 to 559 and 628 to 684; these read PLLS…KSAQ and LMNG…ALNQ.

It belongs to the orthoreovirus mu-NS protein family. Interacts with mu-2. Interacts with sigma-NS; in viral factories. Interacts with the inner capsid proteins lambda-1 and sigma-2, and outer capsid protein lambda-2; in viral factories. Post-translationally, the N-terminus is blocked.

It is found in the host cytoplasm. Non-structural protein implicated with protein sigma-NS in forming the matrix of viral factories, which are large inclusions in the host cytoplasm where replication intermediates are assembled and viral RNA replication takes place. Together with mu-2, recruits the other core proteins to these factories. Binds RNA and recruits viral mRNAs to sites of viral replication. This chain is Protein mu-NS (M3), found in Reovirus type 3 (strain Dearing) (T3D).